Reading from the N-terminus, the 308-residue chain is Acetaldehyde dehydrogenase 2 (308 aa).

Position 9–12 (9–12) interacts with NAD(+); that stretch reads SGNI. Cys-127 (acyl-thioester intermediate) is an active-site residue. NAD(+) contacts are provided by residues 158 to 166 and Asn-286; that span reads SAGPGTRAN.

The protein belongs to the acetaldehyde dehydrogenase family.

The enzyme catalyses acetaldehyde + NAD(+) + CoA = acetyl-CoA + NADH + H(+). In Parafrankia sp. (strain EAN1pec), this protein is Acetaldehyde dehydrogenase 2.